The primary structure comprises 440 residues: Xaa-Pro dipeptidase (440 aa).

Mn(2+) is bound by residues Asp244, Asp255, His335, Glu380, and Glu419.

It belongs to the peptidase M24B family. Bacterial-type prolidase subfamily. Mn(2+) serves as cofactor.

It catalyses the reaction Xaa-L-Pro dipeptide + H2O = an L-alpha-amino acid + L-proline. Splits dipeptides with a prolyl residue in the C-terminal position. In Shewanella halifaxensis (strain HAW-EB4), this protein is Xaa-Pro dipeptidase.